Here is a 278-residue protein sequence, read N- to C-terminus: NAD-capped RNA hydrolase NudC (278 aa).

Residue R84 participates in substrate binding. The Zn(2+) site is built by C114 and C117. E127 lines the substrate pocket. C132 lines the Zn(2+) pocket. Y140 contacts substrate. The Nudix hydrolase domain maps to 141-264 (PRISPSMIVL…SIARYLIEAY (124 aa)). A174, E190, and E194 together coordinate a divalent metal cation. The Nudix box signature appears at 175–196 (GFVEPGESAEDCVHREVMEEVQ). Residue 208 to 215 (QCWPFPHS) coordinates substrate. Residue E235 coordinates a divalent metal cation. Substrate is bound at residue A257.

It belongs to the Nudix hydrolase family. NudC subfamily. Homodimer. Mg(2+) serves as cofactor. Requires Mn(2+) as cofactor. Zn(2+) is required as a cofactor.

It catalyses the reaction a 5'-end NAD(+)-phospho-ribonucleoside in mRNA + H2O = a 5'-end phospho-adenosine-phospho-ribonucleoside in mRNA + beta-nicotinamide D-ribonucleotide + 2 H(+). The enzyme catalyses NAD(+) + H2O = beta-nicotinamide D-ribonucleotide + AMP + 2 H(+). The catalysed reaction is NADH + H2O = reduced beta-nicotinamide D-ribonucleotide + AMP + 2 H(+). In terms of biological role, mRNA decapping enzyme that specifically removes the nicotinamide adenine dinucleotide (NAD) cap from a subset of mRNAs by hydrolyzing the diphosphate linkage to produce nicotinamide mononucleotide (NMN) and 5' monophosphate mRNA. The NAD-cap is present at the 5'-end of some mRNAs and stabilizes RNA against 5'-processing. Has preference for mRNAs with a 5'-end purine. Catalyzes the hydrolysis of a broad range of dinucleotide pyrophosphates. The protein is NAD-capped RNA hydrolase NudC of Pseudomonas syringae pv. syringae (strain B728a).